Consider the following 311-residue polypeptide: Aspartate carbamoyltransferase catalytic subunit (311 aa).

Carbamoyl phosphate contacts are provided by arginine 55 and threonine 56. Lysine 85 contacts L-aspartate. Positions 106, 135, and 138 each coordinate carbamoyl phosphate. Residues arginine 168 and arginine 230 each contribute to the L-aspartate site. Carbamoyl phosphate contacts are provided by leucine 268 and proline 269.

The protein belongs to the aspartate/ornithine carbamoyltransferase superfamily. ATCase family. In terms of assembly, heterododecamer (2C3:3R2) of six catalytic PyrB chains organized as two trimers (C3), and six regulatory PyrI chains organized as three dimers (R2).

It catalyses the reaction carbamoyl phosphate + L-aspartate = N-carbamoyl-L-aspartate + phosphate + H(+). Its pathway is pyrimidine metabolism; UMP biosynthesis via de novo pathway; (S)-dihydroorotate from bicarbonate: step 2/3. In terms of biological role, catalyzes the condensation of carbamoyl phosphate and aspartate to form carbamoyl aspartate and inorganic phosphate, the committed step in the de novo pyrimidine nucleotide biosynthesis pathway. The sequence is that of Aspartate carbamoyltransferase catalytic subunit from Yersinia pseudotuberculosis serotype O:1b (strain IP 31758).